The sequence spans 172 residues: Translationally-controlled tumor protein homolog (172 aa).

The region spanning 1–172 (MKIYKDIITG…FKHGLDEEKC (172 aa)) is the TCTP domain.

This sequence belongs to the TCTP family.

The protein localises to the cytoplasm. In terms of biological role, involved in calcium binding and microtubule stabilization. In Drosophila yakuba (Fruit fly), this protein is Translationally-controlled tumor protein homolog.